The following is a 481-amino-acid chain: ATP synthase subunit beta, chloroplastic (481 aa).

162–169 (GGAGVGKT) is a binding site for ATP.

Belongs to the ATPase alpha/beta chains family. F-type ATPases have 2 components, CF(1) - the catalytic core - and CF(0) - the membrane proton channel. CF(1) has five subunits: alpha(3), beta(3), gamma(1), delta(1), epsilon(1). CF(0) has four main subunits: a(1), b(1), b'(1) and c(9-12).

The protein resides in the plastid. It localises to the chloroplast thylakoid membrane. It catalyses the reaction ATP + H2O + 4 H(+)(in) = ADP + phosphate + 5 H(+)(out). Produces ATP from ADP in the presence of a proton gradient across the membrane. The catalytic sites are hosted primarily by the beta subunits. The polypeptide is ATP synthase subunit beta, chloroplastic (Oltmannsiellopsis viridis (Marine flagellate)).